The primary structure comprises 761 residues: Prolyl oligopeptidase A (761 aa).

Residues serine 606, aspartate 690, and histidine 726 each act as charge relay system in the active site.

Belongs to the peptidase S9A family. In terms of assembly, monomer.

It catalyses the reaction Hydrolysis of Pro-|-Xaa &gt;&gt; Ala-|-Xaa in oligopeptides.. Its function is as follows. Housekeeping prolyl oligopeptidase (POP) that behaves like a conventional POP by cleaving peptide bonds on the C-terminal side of prolyl residues within peptides that are up to approximately 30 amino acids long. The chain is Prolyl oligopeptidase A from Amanita bisporigera (Destroying angel).